The sequence spans 402 residues: tRNA(Met) cytidine acetate ligase (402 aa).

Residues 7-20 (ITEY…HELH), Gly102, Asn171, and Arg196 contribute to the ATP site.

It belongs to the TmcAL family.

It is found in the cytoplasm. The enzyme catalyses cytidine(34) in elongator tRNA(Met) + acetate + ATP = N(4)-acetylcytidine(34) in elongator tRNA(Met) + AMP + diphosphate. In terms of biological role, catalyzes the formation of N(4)-acetylcytidine (ac(4)C) at the wobble position of elongator tRNA(Met), using acetate and ATP as substrates. First activates an acetate ion to form acetyladenylate (Ac-AMP) and then transfers the acetyl group to tRNA to form ac(4)C34. This chain is tRNA(Met) cytidine acetate ligase, found in Clostridium perfringens (strain ATCC 13124 / DSM 756 / JCM 1290 / NCIMB 6125 / NCTC 8237 / Type A).